A 379-amino-acid chain; its full sequence is MILLVNGGAATSIHPNAARFYRIGTMSRQIHGAVSSSKHISLKTQHPLSDSNSELAYGASGSETRVYTRKKRLKQEPFEPLEKYSGKGVNTHKLCGLPDIEDFAYKKTIGSPSSSRSTETSITVTSVKTAGYPPENWVEVLEGIRQMRSSEDAPVDSMGCDKAGSFLPPTERRFAVLLGALLSSQTKDQVNNAAIHRLHQNGLLTPEAVDKADESTIKELIYPVGFYTRKATYMKKIARICLVKYDGDIPSSLDDLLSLPGIGPKMAHLILHIAWNDVQGICVDTHVHRICNRLGWVSRPGTKQKTTSPEETRVALQQWLPKEEWVAINPLLVGFGQMICTPIRPRCEACSVSKLCPAAFKETSSPSSKLKKSNRSKEP.

The transit peptide at 1-54 (MILLVNGGAATSIHPNAARFYRIGTMSRQIHGAVSSSKHISLKTQHPLSDSNSE) directs the protein to the chloroplast. The HhH domain maps to 244-272 (KYDGDIPSSLDDLLSLPGIGPKMAHLILH). Catalysis depends on K265, which acts as the Nucleophile; for N-glycosylase activity. C340, C347, C350, and C356 together coordinate [4Fe-4S] cluster.

This sequence belongs to the Nth/MutY family. [4Fe-4S] cluster is required as a cofactor. Expressed at low levels in roots, stems, leaves and flowers.

It localises to the plastid. It is found in the chloroplast stroma. Its subcellular location is the chloroplast nucleoid. The enzyme catalyses 2'-deoxyribonucleotide-(2'-deoxyribose 5'-phosphate)-2'-deoxyribonucleotide-DNA = a 3'-end 2'-deoxyribonucleotide-(2,3-dehydro-2,3-deoxyribose 5'-phosphate)-DNA + a 5'-end 5'-phospho-2'-deoxyribonucleoside-DNA + H(+). In terms of biological role, bifunctional DNA N-glycosylase with associated apurinic/apyrimidinic (AP) lyase function that catalyzes the first step in base excision repair (BER), the primary repair pathway for the repair of oxidative DNA damage. The DNA N-glycosylase activity releases the damaged DNA base from DNA by cleaving the N-glycosidic bond, leaving an AP site. The AP lyase activity cleaves the phosphodiester bond 3' to the AP site by a beta-elimination. Primarily recognizes and repairs oxidative base damage of pyrimidines. This Arabidopsis thaliana (Mouse-ear cress) protein is Endonuclease III homolog 1, chloroplastic.